The following is a 377-amino-acid chain: Protein FAM199X-B (377 aa).

Residues 240 to 254 (KEHSPRQRCTRESWK) are compositionally biased toward basic and acidic residues. The disordered stretch occupies residues 240 to 350 (KEHSPRQRCT…EQRQARKERI (111 aa)). Residues 256 to 301 (TSYSTASTSGVSGASVSSSSASMVSTASSTGSSGGNSASNSSANMS) show a composition bias toward low complexity. The segment covering 319–338 (DSKKRSKQRKLQQKALRKRQ) has biased composition (basic residues). The stretch at 321 to 349 (KKRSKQRKLQQKALRKRQLKEQRQARKER) forms a coiled coil. Positions 339 to 350 (LKEQRQARKERI) are enriched in basic and acidic residues.

This sequence belongs to the FAM199 family.

The polypeptide is Protein FAM199X-B (fam199x-b) (Xenopus laevis (African clawed frog)).